The primary structure comprises 225 residues: UPF0758 protein Sputw3181_0338 (225 aa).

In terms of domain architecture, MPN spans Val102–Ile224. Positions 173, 175, and 186 each coordinate Zn(2+). The JAMM motif signature appears at His173 to Asp186.

The protein belongs to the UPF0758 family.

The polypeptide is UPF0758 protein Sputw3181_0338 (Shewanella sp. (strain W3-18-1)).